We begin with the raw amino-acid sequence, 612 residues long: Dihydroxy-acid dehydratase (612 aa).

D81 provides a ligand contact to Mg(2+). Position 122 (C122) interacts with [2Fe-2S] cluster. Mg(2+) is bound by residues D123 and K124. An N6-carboxylysine modification is found at K124. C193 lines the [2Fe-2S] cluster pocket. E489 provides a ligand contact to Mg(2+). The active-site Proton acceptor is the S515.

The protein belongs to the IlvD/Edd family. In terms of assembly, homodimer. The cofactor is [2Fe-2S] cluster. It depends on Mg(2+) as a cofactor.

It carries out the reaction (2R)-2,3-dihydroxy-3-methylbutanoate = 3-methyl-2-oxobutanoate + H2O. The catalysed reaction is (2R,3R)-2,3-dihydroxy-3-methylpentanoate = (S)-3-methyl-2-oxopentanoate + H2O. The protein operates within amino-acid biosynthesis; L-isoleucine biosynthesis; L-isoleucine from 2-oxobutanoate: step 3/4. It functions in the pathway amino-acid biosynthesis; L-valine biosynthesis; L-valine from pyruvate: step 3/4. Functionally, functions in the biosynthesis of branched-chain amino acids. Catalyzes the dehydration of (2R,3R)-2,3-dihydroxy-3-methylpentanoate (2,3-dihydroxy-3-methylvalerate) into 2-oxo-3-methylpentanoate (2-oxo-3-methylvalerate) and of (2R)-2,3-dihydroxy-3-methylbutanoate (2,3-dihydroxyisovalerate) into 2-oxo-3-methylbutanoate (2-oxoisovalerate), the penultimate precursor to L-isoleucine and L-valine, respectively. This Pseudomonas aeruginosa (strain LESB58) protein is Dihydroxy-acid dehydratase.